Consider the following 148-residue polypeptide: Azurin (148 aa).

A signal peptide spans 1-20; it reads MLRKLAAVSLLSLLSAPLLA. The region spanning 21–148 is the Plastocyanin-like domain; the sequence is AECSVDIQGN…ALMKGTLTLK (128 aa). C23 and C46 are oxidised to a cystine. Cu cation contacts are provided by H66, C132, H137, and M141.

The protein resides in the periplasm. Functionally, transfers electrons from cytochrome c551 to cytochrome oxidase. The chain is Azurin (azu) from Pseudomonas aeruginosa (strain ATCC 15692 / DSM 22644 / CIP 104116 / JCM 14847 / LMG 12228 / 1C / PRS 101 / PAO1).